The chain runs to 5628 residues: Polyketide synthase ThaG (5628 aa).

The Ketosynthase family 3 (KS3) 1 domain occupies 13–448; the sequence is HDDIAVIGIA…GTNAHVVLRE (436 aa). Residues C184, H319, and H361 each act as for beta-ketoacyl synthase 1 activity in the active site. Disordered stretches follow at residues 552-613 and 1156-1183; these read GNLV…DGPT and ASPG…RAEA. Residues 559-589 show a composition bias toward basic and acidic residues; it reads GPHDEQADHDGSGEHGEHGERARAGADDLSR. A compositionally biased stretch (low complexity) spans 1156-1173; it reads ASPGAASSGAAAPNAASD. A compositionally biased stretch (basic and acidic residues) spans 1174–1183; that stretch reads ASRDTERAEA. The 78-residue stretch at 1209 to 1286 folds into the Carrier 1 domain; the sequence is AHGSARLPAL…RLAGHLATRL (78 aa). Residue S1246 is modified to O-(pantetheine 4'-phosphoryl)serine. In terms of domain architecture, Ketosynthase family 3 (KS3) 2 spans 1373 to 1781; sequence YEPIAIVGMS…GTNAHVIVEA (409 aa). Catalysis depends on for beta-ketoacyl synthase 2 activity residues C1529, H1664, and H1704. The segment at 1967–2099 is N-terminal hotdog fold 1; the sequence is AREPGARERA…GVVDELNEPA (133 aa). The 295-residue stretch at 1967–2261 folds into the PKS/mFAS DH 1 domain; that stretch reads AREPGARERA…SARWRKLAGA (295 aa). H1999 acts as the Proton acceptor; for dehydratase activity 1 in catalysis. Residues 2113-2261 form a C-terminal hotdog fold 1 region; it reads AGERVDGAAL…SARWRKLAGA (149 aa). The Proton donor; for dehydratase activity 1 role is filled by D2175. Positions 2426–2446 are disordered; sequence DADEDDRDGREPAGGPPLRDD. In terms of domain architecture, Carrier 2 spans 2702-2780; it reads PAARVDLHAL…AIARALDASA (79 aa). Residues 2817–2836 are disordered; that stretch reads TPPDAGAPQRGAHAAAAEGS. Positions 2822-2835 are enriched in low complexity; sequence GAPQRGAHAAAAEG. Residues 2862-2935 form the Carrier 3 domain; it reads ARVGARLSAL…ELTDYFVRRH (74 aa). Position 2896 is an O-(pantetheine 4'-phosphoryl)serine (S2896). Residues 3005–3430 form the Ketosynthase family 3 (KS3) 3 domain; the sequence is ADAIAVIGLA…GANAHVIVRE (426 aa). Catalysis depends on for beta-ketoacyl synthase 3 activity residues C3175, H3310, and H3351. Positions 3526 to 3546 are disordered; it reads PGKKQLRGNGRARRGDAPPAG. The tract at residues 3621 to 3743 is N-terminal hotdog fold 2; sequence HPMLDANRSE…GRSPSRAARG (123 aa). One can recognise a PKS/mFAS DH 2 domain in the interval 3621–3895; the sequence is HPMLDANRSE…SRAAASWRTA (275 aa). H3650 serves as the catalytic Proton acceptor; for dehydratase activity 2. Residues 3758–3895 form a C-terminal hotdog fold 2 region; sequence RAAPAFDADA…SRAAASWRTA (138 aa). The active-site Proton donor; for dehydratase activity 2 is D3818. A disordered region spans residues 3917 to 3942; it reads PAAESPSAATSTSAATSPAISTSAAT. One can recognise a Carrier 4 domain in the interval 4840 to 4914; that stretch reads TRTAALLRSL…ALAAYVGSQL (75 aa). The residue at position 4874 (S4874) is an O-(pantetheine 4'-phosphoryl)serine. A disordered region spans residues 4960–4992; it reads APRARTGADAPDTSLASSASSISSARASSPASP. One can recognise a Ketosynthase family 3 (KS3) 4 domain in the interval 4998–5424; it reads SFDVAIVGAS…GVNAHVVLEE (427 aa). Active-site for beta-ketoacyl synthase 4 activity residues include C5158, H5293, and H5339. Residues 5470-5544 form the Carrier 5 domain; sequence ARIEAVIRDA…ALRDHVAERI (75 aa). S5504 carries the O-(pantetheine 4'-phosphoryl)serine modification. A disordered region spans residues 5573-5603; that stretch reads VSEATEASDASEASDASEASEASEASEASKA.

Requires pantetheine 4'-phosphate as cofactor.

It is found in the cytoplasm. Its pathway is antibiotic biosynthesis. Involved in production of the polyketide antibiotic thailandamide. In Burkholderia thailandensis (strain ATCC 700388 / DSM 13276 / CCUG 48851 / CIP 106301 / E264), this protein is Polyketide synthase ThaG.